Reading from the N-terminus, the 337-residue chain is Serpentine receptor class beta-6 (337 aa).

The next 7 membrane-spanning stretches (helical) occupy residues 20–40 (QFYT…LIIF), 62–82 (ILIS…IPFL), 98–118 (IFQN…LGIT), 138–158 (IGVF…YFFF), 183–203 (WLCY…YFLV), 234–254 (TFIS…TLII), and 273–293 (GVYI…CVIL).

The protein belongs to the nematode receptor-like protein srb family. Expressed in the ADL, ADF and ASH chemosensory neurons in the head and in the PHA and PHB chemosensory neurons in the tail. Low expression also observed in the egg-laying structures in the mid-body region.

The protein localises to the cell membrane. Mediates recognition and avoidance of Streptomyces species by detecting dodecanoic acid secreted by the bacteria. Also mediates avoidance of decanoic acid which is not secreted by Streptomyces species but this may represent an additional important avoidance response in the environment. The polypeptide is Serpentine receptor class beta-6 (srb-6) (Caenorhabditis elegans).